A 535-amino-acid polypeptide reads, in one-letter code: Probable acyl-activating enzyme 22 (535 aa).

This sequence belongs to the ATP-dependent AMP-binding enzyme family.

May act as an acid--thiol ligase that activates carboxylic acids by forming acyl-CoAs. The polypeptide is Probable acyl-activating enzyme 22 (AEE22) (Arabidopsis thaliana (Mouse-ear cress)).